We begin with the raw amino-acid sequence, 481 residues long: Regulator of G-protein signaling 1 (481 aa).

The tract at residues 1–31 (MPALHNPSSPPPSYEAVTSYRNGNSIDSGDK) is disordered. Residues 33-227 (QQCSRLMKIT…SVHEIGKSKN (195 aa)) are fungal-DR. Residues 232–312 (PVYSVSSPSP…KGVSYFLTGK (81 aa)) enclose the DEP domain. The RGS domain maps to 344–474 (ILETILRKPN…AGDSLLKFLE (131 aa)).

The protein localises to the nucleus. It is found in the cytoplasm. Functionally, negatively regulates pheromone signaling during mating. Acts in a negative feedback loop that is essential for the mating process. This loop acts to down-regulate cellular sensitivity to pheromone. Activated by ste11. The chain is Regulator of G-protein signaling 1 (rgs1) from Schizosaccharomyces pombe (strain 972 / ATCC 24843) (Fission yeast).